The following is a 121-amino-acid chain: Alpha-lactalbumin (121 aa).

One can recognise a C-type lysozyme domain in the interval 1–121 (IDYRKCQASQ…CLEDLDQWRC (121 aa)). 4 disulfide bridges follow: Cys-6–Cys-121, Cys-28–Cys-112, Cys-61–Cys-77, and Cys-73–Cys-91. Asn-44 is a glycosylation site (N-linked (GlcNAc...) asparagine). Lys-79, Asp-82, Asp-84, Asp-87, and Asp-88 together coordinate Ca(2+).

Belongs to the glycosyl hydrolase 22 family. Lactose synthase (LS) is a heterodimer of a catalytic component, beta1,4-galactosyltransferase (beta4Gal-T1) and a regulatory component, alpha-lactalbumin (LA). As to expression, mammary gland specific. Secreted in milk.

The protein resides in the secreted. Regulatory subunit of lactose synthase, changes the substrate specificity of galactosyltransferase in the mammary gland making glucose a good acceptor substrate for this enzyme. This enables LS to synthesize lactose, the major carbohydrate component of milk. In other tissues, galactosyltransferase transfers galactose onto the N-acetylglucosamine of the oligosaccharide chains in glycoproteins. The protein is Alpha-lactalbumin (LALBA) of Notamacropus rufogriseus (Red-necked wallaby).